The chain runs to 262 residues: Glutamate racemase (262 aa).

Residues 5–6 and 37–38 each bind substrate; these read DS and YG. C69 (proton donor/acceptor) is an active-site residue. Residue 70 to 71 coordinates substrate; sequence NT. C181 acts as the Proton donor/acceptor in catalysis. 182 to 183 lines the substrate pocket; the sequence is TH.

It belongs to the aspartate/glutamate racemases family.

It catalyses the reaction L-glutamate = D-glutamate. It participates in cell wall biogenesis; peptidoglycan biosynthesis. Functionally, provides the (R)-glutamate required for cell wall biosynthesis. The protein is Glutamate racemase of Buchnera aphidicola subsp. Acyrthosiphon pisum (strain 5A).